A 59-amino-acid chain; its full sequence is MAKTIKVTQTRSSIARLPKHKATLKGLGLRNIRHTVELIDTPAIRGMINQVSYMVKVEE.

This sequence belongs to the universal ribosomal protein uL30 family. Part of the 50S ribosomal subunit.

This chain is Large ribosomal subunit protein uL30, found in Haemophilus ducreyi (strain 35000HP / ATCC 700724).